We begin with the raw amino-acid sequence, 292 residues long: uncharacterized protein (292 aa).

The signal sequence occupies residues 1–19 (MFKKYIFILLLLVTSIVKA). The disordered stretch occupies residues 271 to 292 (KRNNPPLKTNNAKSKNPYDQSK).

This is an uncharacterized protein from Rickettsia bellii (strain RML369-C).